Here is a 144-residue protein sequence, read N- to C-terminus: MSEKQSPKTSEAECSAMDLPEFEDEENWLFKVLGFQPGPSSALDDDTDDQADEPLSAAEFLHLQDILQEDRVSSTDDEDTCQAGCTEDDETSHSDRDIDNNVKVITGNIKASPSMYMEMFTDQNPQADQDLEETESDGAMNPTD.

Disordered stretches follow at residues 1-21 (MSEK…DLPE), 69-99 (EDRV…RDID), and 120-144 (FTDQ…NPTD). Positions 75–90 (TDDEDTCQAGCTEDDE) are enriched in acidic residues.

In terms of tissue distribution, testis.

Its function is as follows. May have an RNA/DNA binding role. This Mus musculus (Mouse) protein is Testis-specific protein TSX (Tsx).